Consider the following 125-residue polypeptide: Desulfoferrodoxin (125 aa).

Residues His49, His69, His75, Cys115, and His118 each coordinate Fe cation.

It belongs to the desulfoferrodoxin family. Requires Cu(2+) as cofactor.

It catalyses the reaction reduced [rubredoxin] + superoxide + 2 H(+) = oxidized [rubredoxin] + H2O2. In terms of biological role, catalyzes the reduction of superoxide to hydrogen peroxide, using electrons from NADH and NADH:rubredoxin oxidoreductase (NROR) and rubredoxin (Rd) as electron transport intermediaries between NADH and Dfx. Is a key factor in the superoxide reductase dependent part of a pathway for detoxification of reactive oxygen species (ROS) in C.acetobutylicum, an obligate anaerobic bacterium. This Clostridium acetobutylicum (strain ATCC 824 / DSM 792 / JCM 1419 / IAM 19013 / LMG 5710 / NBRC 13948 / NRRL B-527 / VKM B-1787 / 2291 / W) protein is Desulfoferrodoxin (dfx).